The following is a 296-amino-acid chain: GTPase Era (296 aa).

The Era-type G domain occupies lysine 3–glutamate 170. A G1 region spans residues glycine 11–serine 18. Glycine 11–serine 18 serves as a coordination point for GTP. Residues glutamine 37–asparagine 41 are G2. The tract at residues aspartate 58–glycine 61 is G3. Residues aspartate 58–isoleucine 62 and asparagine 120–aspartate 123 each bind GTP. Residues asparagine 120 to aspartate 123 form a G4 region. Residues isoleucine 149–alanine 151 are G5. Positions leucine 201–lysine 278 constitute a KH type-2 domain.

The protein belongs to the TRAFAC class TrmE-Era-EngA-EngB-Septin-like GTPase superfamily. Era GTPase family. Monomer.

It is found in the cytoplasm. Its subcellular location is the cell membrane. Its function is as follows. An essential GTPase that binds both GDP and GTP, with rapid nucleotide exchange. Plays a role in 16S rRNA processing and 30S ribosomal subunit biogenesis and possibly also in cell cycle regulation and energy metabolism. The chain is GTPase Era from Clostridium perfringens (strain ATCC 13124 / DSM 756 / JCM 1290 / NCIMB 6125 / NCTC 8237 / Type A).